Here is a 286-residue protein sequence, read N- to C-terminus: Probable endonuclease 4 (286 aa).

Zn(2+)-binding residues include His-67, His-107, Glu-146, Asp-180, His-183, His-217, Asp-230, His-232, and Glu-262.

It belongs to the AP endonuclease 2 family. It depends on Zn(2+) as a cofactor.

The enzyme catalyses Endonucleolytic cleavage to 5'-phosphooligonucleotide end-products.. In terms of biological role, endonuclease IV plays a role in DNA repair. It cleaves phosphodiester bonds at apurinic or apyrimidinic (AP) sites, generating a 3'-hydroxyl group and a 5'-terminal sugar phosphate. The sequence is that of Probable endonuclease 4 from Methanosphaerula palustris (strain ATCC BAA-1556 / DSM 19958 / E1-9c).